Here is a 359-residue protein sequence, read N- to C-terminus: CDP-glucose 4,6-dehydratase (359 aa).

Belongs to the NAD(P)-dependent epimerase/dehydratase family. NAD(+) is required as a cofactor.

The enzyme catalyses CDP-D-glucose = CDP-4-dehydro-6-deoxy-D-glucose + H2O. It participates in nucleotide-sugar biosynthesis; CDP-3,6-dideoxy-D-mannose biosynthesis; CDP-3,6-dideoxy-D-mannose from CTP and alpha-D-glucose 1-phosphate: step 2/5. It functions in the pathway bacterial outer membrane biogenesis; LPS O-antigen biosynthesis. The sequence is that of CDP-glucose 4,6-dehydratase (rfbG) from Salmonella typhimurium (strain LT2 / SGSC1412 / ATCC 700720).